The chain runs to 363 residues: MTLQRTPLHDLAIAAGAKFVPFSGWEMAVQYKGLKVEHQAVRTEVGMFDISHMGKFQLAGENLIAAMQKLVPSNLARLAPGQAQYTVLLNDHGGIIDDVIYYHQGDRQGFLIVNAATTQKDWDWLTHHLTAQGITLTDVSQENILLAIQGPQAEKALQPVVENLDLATLKLFNHGQGQIFGETAFIARTGYTGEDGFEVMVAPTAGKKLWSALIDAGVMPCGLGARDTLRLEAGLHLYGQDMDDDTTPLEAGLGWLIHWQEKDAFIAKDILQTQKAAGVQRRLVGLEMQGRGIARHDYSVLVNGEAVGLVTSGTMSPTLEKAIALAYLPLEFSKVGQAVTVEIRGKQYPAQVVKKPFYRASKK.

It belongs to the GcvT family. The glycine cleavage system is composed of four proteins: P, T, L and H.

It catalyses the reaction N(6)-[(R)-S(8)-aminomethyldihydrolipoyl]-L-lysyl-[protein] + (6S)-5,6,7,8-tetrahydrofolate = N(6)-[(R)-dihydrolipoyl]-L-lysyl-[protein] + (6R)-5,10-methylene-5,6,7,8-tetrahydrofolate + NH4(+). In terms of biological role, the glycine cleavage system catalyzes the degradation of glycine. This Picosynechococcus sp. (strain ATCC 27264 / PCC 7002 / PR-6) (Agmenellum quadruplicatum) protein is Aminomethyltransferase.